Consider the following 87-residue polypeptide: U3-theraphotoxin-Cg1b (87 aa).

Positions 1 to 23 (MRTFTLIAILTCAVLVIFHVSAA) are cleaved as a signal peptide. A propeptide spanning residues 24 to 48 (EELEAQDVIQPEDIFTGVATLEEDR) is cleaved from the precursor. Intrachain disulfides connect Cys52–Cys65, Cys56–Cys79, and Cys73–Cys84.

Belongs to the neurotoxin 12 (Hwtx-2) family. 03 (juruin) subfamily. In terms of tissue distribution, expressed by the venom gland.

It localises to the secreted. Its function is as follows. Probable ion channel inhibitor. The protein is U3-theraphotoxin-Cg1b of Chilobrachys guangxiensis (Chinese earth tiger tarantula).